The primary structure comprises 592 residues: Potassium-transporting ATPase potassium-binding subunit (592 aa).

Transmembrane regions (helical) follow at residues 6-26 (WLETILFFVVLLALIKPFGTY), 67-87 (ACAMLLFNLVFAVSLFAMLLL), 136-156 (GFAVHNFTSAATGIVIAIAAI), 179-199 (LYILLPLSLIAAIFLVSQGVI), 283-303 (LSNIFEVFLILLISGGLTYTF), 312-332 (QGWALLAVMLAILILAIGVFY), 359-379 (FGLAGSALFATATTGTSCGAV), 389-409 (IGGMVPLSLILLSEVIFGGVG), 411-431 (GLYTMLAFVVIAVFVAGLMIG), 450-470 (ITTVLASGILVLIFSGIAMIL), 489-511 (LYAFASMSNNNGSAFAGLNGNTL), 519-539 (VAMLLGRFVPAVAVLAMAGGL), and 559-579 (FALWLTLVILIVGALTFFPAL).

Belongs to the KdpA family. The system is composed of three essential subunits: KdpA, KdpB and KdpC.

It localises to the cell inner membrane. Part of the high-affinity ATP-driven potassium transport (or Kdp) system, which catalyzes the hydrolysis of ATP coupled with the electrogenic transport of potassium into the cytoplasm. This subunit binds the periplasmic potassium ions and delivers the ions to the membrane domain of KdpB through an intramembrane tunnel. The chain is Potassium-transporting ATPase potassium-binding subunit from Geotalea uraniireducens (strain Rf4) (Geobacter uraniireducens).